The primary structure comprises 172 residues: MSKATKRKHVVKEVLEDYVTPTEDQQIMRVLGSNGNNLHEAVTGSGERFLLSMPTKFRKNIWIKRGDFVIVDPIKEGGKVKGEISFILYRDHIQHLRKLGVWPEGFQEDRTSGERNEGTQKERSEEKEEEEGDSESEDDDSDLFVNTNRATVLYSESEEETDEDEEEDKGRA.

The S1-like domain occupies 5–89 (TKRKHVVKEV…VKGEISFILY (85 aa)). The span at 107-126 (QEDRTSGERNEGTQKERSEE) shows a compositional bias: basic and acidic residues. The tract at residues 107-172 (QEDRTSGERN…EDEEEDKGRA (66 aa)) is disordered. 2 stretches are compositionally biased toward acidic residues: residues 127 to 142 (KEEE…DDSD) and 156 to 172 (ESEE…KGRA).

Belongs to the EIF1AD family.

The protein localises to the nucleus. Functionally, may play a role into cellular response to oxidative stress. May decrease cell proliferation. This is Probable RNA-binding protein EIF1AD (eif1ad) from Danio rerio (Zebrafish).